The chain runs to 276 residues: Rhomboid protease GlpG (276 aa).

6 helical membrane-spanning segments follow: residues 94–114 (GPVT…MQIL), 142–162 (ALMH…WYLG), 169–189 (LGSG…GYVQ), 192–212 (FSGP…GYVW), 229–249 (LIIF…GMSM), and 250–270 (ANGA…VDSL). S201 serves as the catalytic Nucleophile. H254 is an active-site residue.

The protein belongs to the peptidase S54 family.

It is found in the cell inner membrane. It catalyses the reaction Cleaves type-1 transmembrane domains using a catalytic dyad composed of serine and histidine that are contributed by different transmembrane domains.. In terms of biological role, rhomboid-type serine protease that catalyzes intramembrane proteolysis. This Escherichia coli (strain 55989 / EAEC) protein is Rhomboid protease GlpG.